The sequence spans 184 residues: Translocon-associated protein subunit beta (184 aa).

Positions 1–20 are cleaved as a signal peptide; the sequence is MNFKTVISLFLVLFVSFVYC. Residues 21-147 are Lumenal-facing; sequence ENGAELLFHK…SQADYEKRTS (127 aa). N-linked (GlcNAc...) asparagine glycosylation is present at N94. The chain crosses the membrane as a helical span at residues 148–168; it reads LLIKEWITFFVLCAGAIALPY. The Cytoplasmic portion of the chain corresponds to 169-184; the sequence is SISTYYKKNYENGIKK.

The protein belongs to the TRAP-beta family. In terms of assembly, heterotrimer of TRAP-alpha, TRAP-beta and TRAP-gamma.

The protein resides in the endoplasmic reticulum membrane. Functionally, TRAP proteins are part of a complex whose function is to bind calcium to the ER membrane and thereby regulate the retention of ER resident proteins. In Dictyostelium discoideum (Social amoeba), this protein is Translocon-associated protein subunit beta (ssr2).